A 485-amino-acid chain; its full sequence is Sphingosine kinase 1 (485 aa).

The DAGKc domain occupies 116 to 258 (GRPKKLLVFV…LDVATISQGT (143 aa)). Residues 126-128 (NPF) and Thr158 contribute to the ATP site. Substrate is bound at residue 183 to 186 (SGDG). Asp185 serves as the catalytic Proton donor/acceptor. Residues Glu190 and 215 to 217 (GSG) each bind ATP. Residue Asp276 participates in substrate binding. ATP is bound by residues Arg283, Arg289, and 446-448 (DGE).

Requires Mg(2+) as cofactor. As to expression, highly expressed in stems and flowers and at lower levels in roots, leaves and siliques.

The protein resides in the vacuole membrane. The catalysed reaction is a sphingoid base + ATP = a sphingoid 1-phosphate + ADP + H(+). With respect to regulation, activated by phosphatidic acid (PA). Binding with PA stimulates the activity by promoting the binding of substrate to the catalytic site. Functionally, involved in the production of sphingolipid metabolites. Phosphorylates sphingosine and various sphingoid long-chain base (LCB) products, such as phytosphingosine (PHS, 4-hydroxysphinganine), 4-hydroxy-8-sphingenine, 4,8-sphingadienine, D-erythro-dihydrosphingosine and D,L-threo-dihydrosphingosine. Is required for abscisic acid (ABA) signaling that mediates stomatal closure, inhibition of seed germination and root elongation. May function upstream of PLDALPHA1 and phosphatidic acid (PA) in an amplification response to ABA that mediates stomatal closure. This chain is Sphingosine kinase 1 (SPHK1), found in Arabidopsis thaliana (Mouse-ear cress).